The following is a 308-amino-acid chain: MDTGNKTLPQDFLLLGFPGSQTLQLSLFMLFLVMYILTVSGNVAILMLVSTSHQLHTPMYFFLSNLSFLEIWYTTAAVPKALAILLGRSQTISFTSCLLQMYFVFSLGCTEYFLLAAMAYDRCLAICYPLHYGAIMSSLLSAQLALGSWVCGFVAIAVPTALISGLSFCGPRAINHFFCDIAPWIALACTNTQAVELVAFVIAVVVILSSCLITFVSYVYIISTILRIPSASGRSKAFSTCSSHLTVVLIWYGSTVFLHVRTSIKDALDLIKAVHVLNTVVTPVLNPFIYTLRNKEVRETLLKKWKGK.

The Extracellular portion of the chain corresponds to 1-25 (MDTGNKTLPQDFLLLGFPGSQTLQL). N5 carries an N-linked (GlcNAc...) asparagine glycan. Residues 26 to 46 (SLFMLFLVMYILTVSGNVAIL) form a helical membrane-spanning segment. Topologically, residues 47 to 54 (MLVSTSHQ) are cytoplasmic. A helical transmembrane segment spans residues 55 to 75 (LHTPMYFFLSNLSFLEIWYTT). Over 76 to 99 (AAVPKALAILLGRSQTISFTSCLL) the chain is Extracellular. C97 and C189 are oxidised to a cystine. A helical transmembrane segment spans residues 100–120 (QMYFVFSLGCTEYFLLAAMAY). Topologically, residues 121-139 (DRCLAICYPLHYGAIMSSL) are cytoplasmic. Residues 140–160 (LSAQLALGSWVCGFVAIAVPT) traverse the membrane as a helical segment. Residues 161 to 197 (ALISGLSFCGPRAINHFFCDIAPWIALACTNTQAVEL) lie on the Extracellular side of the membrane. Residues 198–217 (VAFVIAVVVILSSCLITFVS) traverse the membrane as a helical segment. The Cytoplasmic portion of the chain corresponds to 218–237 (YVYIISTILRIPSASGRSKA). The chain crosses the membrane as a helical span at residues 238-258 (FSTCSSHLTVVLIWYGSTVFL). At 259 to 271 (HVRTSIKDALDLI) the chain is on the extracellular side. A helical membrane pass occupies residues 272–292 (KAVHVLNTVVTPVLNPFIYTL). Residues 293-308 (RNKEVRETLLKKWKGK) are Cytoplasmic-facing.

This sequence belongs to the G-protein coupled receptor 1 family.

Its subcellular location is the cell membrane. Odorant receptor. The chain is Olfactory receptor 6F1 (OR6F1) from Homo sapiens (Human).